The primary structure comprises 353 residues: Envelope glycoprotein M (353 aa).

The Intravirion segment spans residues 1–27 (MAKAGVMTLSHVDRMNLRTWTMAIACC). Residues 28–48 (LLSFVNIVVFSVAAHFPGIGF) form a helical membrane-spanning segment. Residues 49-82 (PCYYPRIIDFDNMNLTMYNAIHHLTPQLFLDPVQ) are Virion surface-facing. A helical transmembrane segment spans residues 83–103 (LIVYVIFTELIFFCVLSYYIV). Topologically, residues 104–132 (CWVQIYFRSEHGTQVNQSTRDINFMGDSA) are intravirion. A helical transmembrane segment spans residues 133 to 153 (TCFTFVLTMDTFQIFLLSLSF). The Virion surface portion of the chain corresponds to 154 to 157 (RLPS). The helical transmembrane segment at 158–178 (MVAFSKCMYFMCLTAFVVTLV) threads the bilayer. Residues 179 to 210 (THYESRERSAFALSKIHPKLQGTIRYRTAVVN) are Intravirion-facing. Residues 211-231 (LTQLILGFATMVLAMSLALGF) traverse the membrane as a helical segment. Over 232-240 (GNSFFVKTA) the chain is Virion surface. The chain crosses the membrane as a helical span at residues 241–261 (HVVFGAMVAFAIVACVYFSII). Over 262–270 (ESVLSRYMK) the chain is Intravirion. Residues 271–291 (VQFGYHIGTILGVCGAMYPII) form a helical membrane-spanning segment. Topologically, residues 292 to 304 (RYEALNASSYARD) are virion surface. Residues 305–325 (INIGITVLLLLCVAFSVIRTV) traverse the membrane as a helical segment. Topologically, residues 326 to 353 (RFLLRRNKRYRALALDNEEIRALRSDAE) are intravirion.

This sequence belongs to the herpesviridae glycoprotein M family. In terms of assembly, interacts (via N-terminus) with gN (via N-terminus). The gM-gN heterodimer forms the gCII complex.

The protein localises to the virion membrane. It is found in the host Golgi apparatus. It localises to the host trans-Golgi network. The protein resides in the host endosome membrane. Its subcellular location is the host nucleus inner membrane. Envelope glycoprotein important for virion assembly and egress. Plays a role in the correct incorporation of gH-gL into virion membrane. Directs the glycoprotein N (gN) to the host trans-Golgi network. This chain is Envelope glycoprotein M, found in Mus musculus (Mouse).